Reading from the N-terminus, the 425-residue chain is Protein translocase subunit SecY (425 aa).

10 helical membrane-spanning segments follow: residues L15–I35, T62–M82, L113–K131, L139–L159, L168–V188, I201–L221, P266–L286, I304–I324, L364–L384, and S385–L405.

It belongs to the SecY/SEC61-alpha family. In terms of assembly, component of the plastid Sec protein translocase complex, which is composed of at least SecY, SecE and SecG.

Its subcellular location is the plastid. The protein localises to the chloroplast thylakoid membrane. The central subunit of the protein translocation channel SecYE. Consists of two halves formed by TMs 1-5 and 6-10. These two domains form a lateral gate at the front which open onto the bilayer between TMs 2 and 7, and are clamped together by SecE at the back. The channel is closed by both a pore ring composed of hydrophobic SecY resides and a short helix (helix 2A) on the extracellular side of the membrane which forms a plug. The polypeptide is Protein translocase subunit SecY (Trieres chinensis (Marine centric diatom)).